A 307-amino-acid chain; its full sequence is Elongation factor Ts (307 aa).

The segment at 80 to 83 (TDFV) is involved in Mg(2+) ion dislocation from EF-Tu.

Belongs to the EF-Ts family.

It is found in the cytoplasm. Functionally, associates with the EF-Tu.GDP complex and induces the exchange of GDP to GTP. It remains bound to the aminoacyl-tRNA.EF-Tu.GTP complex up to the GTP hydrolysis stage on the ribosome. This Xanthobacter autotrophicus (strain ATCC BAA-1158 / Py2) protein is Elongation factor Ts.